We begin with the raw amino-acid sequence, 62 residues long: Photosystem II reaction center protein Z (62 aa).

Helical transmembrane passes span 8 to 28 (ALFALVAISFILVVGVPVILA) and 41 to 61 (FSGASLWIFLVFVVGILNSFI).

The protein belongs to the PsbZ family. As to quaternary structure, PSII is composed of 1 copy each of membrane proteins PsbA, PsbB, PsbC, PsbD, PsbE, PsbF, PsbH, PsbI, PsbJ, PsbK, PsbL, PsbM, PsbT, PsbY, PsbZ, Psb30/Ycf12, at least 3 peripheral proteins of the oxygen-evolving complex and a large number of cofactors. It forms dimeric complexes.

It localises to the plastid. The protein resides in the chloroplast thylakoid membrane. In terms of biological role, may control the interaction of photosystem II (PSII) cores with the light-harvesting antenna, regulates electron flow through the 2 photosystem reaction centers. PSII is a light-driven water plastoquinone oxidoreductase, using light energy to abstract electrons from H(2)O, generating a proton gradient subsequently used for ATP formation. The chain is Photosystem II reaction center protein Z from Chara vulgaris (Common stonewort).